Reading from the N-terminus, the 1636-residue chain is Tyrosine-protein phosphatase non-receptor type 23 (1636 aa).

The BRO1 domain occupies 8–394; the sequence is PMIWLDLKEA…AKIEDKNEVL (387 aa). 2 TPR repeats span residues 250–283 and 374–407; these read AVAH…LNEA and EEKA…DPET. A coiled-coil region spans residues 550–623; it reads KAVLQNLKRI…VYLEQNLAAQ (74 aa). Residues 701 to 714 are compositionally biased toward basic and acidic residues; the sequence is EAARQQLLDRELKK. Disordered regions lie at residues 701–812 and 888–1151; these read EAAR…GPHA and QAPI…AAEG. Ser-733 bears the Phosphoserine mark. The interval 770-1130 is his; that stretch reads HFPPSPFPSS…SSSPESQHGG (361 aa). Pro residues-rich tracts occupy residues 898–922 and 950–962; these read RPNP…PTPY and RIGP…PQPH. Arg-950 bears the Omega-N-methylarginine mark. 6 repeat units span residues 953–954, 955–956, 957–958, 959–960, 961–962, and 963–964. Residues 953 to 964 form a 6 X 2 AA approximate tandem repeats of P-Q region; it reads PQPQPHPQPHPS. Composition is skewed to pro residues over residues 983–1002, 1036–1050, and 1083–1109; these read LFPP…PYAP, FPSP…PPLA, and HLVP…PPPC. The span at 1120–1131 shows a compositional bias: polar residues; sequence LSSSPESQHGGT. Phosphoserine is present on residues Ser-1122 and Ser-1123. Thr-1131 bears the Phosphothreonine mark. Positions 1192-1452 constitute a Tyrosine-protein phosphatase domain; that stretch reads DTVWRELQDA…RFCYEAVVRH (261 aa). Cys-1392 (phosphocysteine intermediate) is an active-site residue. Positions 1513 to 1636 are disordered; the sequence is LESPVASLPG…LDPLWTLNKT (124 aa). Composition is skewed to pro residues over residues 1523-1533 and 1542-1556; these read PAEPPGLPPAS and SSSP…PEAP. A compositionally biased stretch (low complexity) spans 1567–1587; that stretch reads APSSGPPSSSLELLASLTPEA. At Arg-1615 the chain carries Omega-N-methylarginine.

The protein belongs to the protein-tyrosine phosphatase family. Non-receptor class subfamily. Interacts with GRAP2 and GRB2. Interacts with UBAP1. Interacts with CHMP4B.

It is found in the nucleus. It localises to the cytoplasm. The protein resides in the cytoplasmic vesicle. The protein localises to the endosome. Its subcellular location is the cytoskeleton. It is found in the cilium basal body. It localises to the early endosome. It catalyses the reaction O-phospho-L-tyrosyl-[protein] + H2O = L-tyrosyl-[protein] + phosphate. In terms of biological role, plays a role in sorting of endocytic ubiquitinated cargos into multivesicular bodies (MVBs) via its interaction with the ESCRT-I complex (endosomal sorting complex required for transport I), and possibly also other ESCRT complexes. May act as a negative regulator of Ras-mediated mitogenic activity. Plays a role in ciliogenesis. The chain is Tyrosine-protein phosphatase non-receptor type 23 (PTPN23) from Homo sapiens (Human).